Consider the following 156-residue polypeptide: VapC ribonuclease AF_1683 (156 aa).

The region spanning 4–125 (LIDTGIFFGF…KLISYDSRFS (122 aa)) is the PINc domain. 2 residues coordinate Mg(2+): D6 and D103.

The protein belongs to the PINc/VapC protein family. Mg(2+) serves as cofactor.

Its function is as follows. Toxic component of a type II toxin-antitoxin (TA) system. An RNase. The sequence is that of VapC ribonuclease AF_1683 from Archaeoglobus fulgidus (strain ATCC 49558 / DSM 4304 / JCM 9628 / NBRC 100126 / VC-16).